The following is a 63-amino-acid chain: Large ribosomal subunit protein bL32 (63 aa).

Over residues 1-18 the composition is skewed to basic residues; it reads MPVPKRKTSPSRRGKRRS. The tract at residues 1–26 is disordered; the sequence is MPVPKRKTSPSRRGKRRSHDGLRPEN.

The protein belongs to the bacterial ribosomal protein bL32 family.

The protein is Large ribosomal subunit protein bL32 of Neorickettsia sennetsu (strain ATCC VR-367 / Miyayama) (Ehrlichia sennetsu).